A 180-amino-acid chain; its full sequence is ATP synthase subunit delta (180 aa).

It belongs to the ATPase delta chain family. As to quaternary structure, F-type ATPases have 2 components, F(1) - the catalytic core - and F(0) - the membrane proton channel. F(1) has five subunits: alpha(3), beta(3), gamma(1), delta(1), epsilon(1). F(0) has three main subunits: a(1), b(2) and c(10-14). The alpha and beta chains form an alternating ring which encloses part of the gamma chain. F(1) is attached to F(0) by a central stalk formed by the gamma and epsilon chains, while a peripheral stalk is formed by the delta and b chains.

Its subcellular location is the cell inner membrane. In terms of biological role, f(1)F(0) ATP synthase produces ATP from ADP in the presence of a proton or sodium gradient. F-type ATPases consist of two structural domains, F(1) containing the extramembraneous catalytic core and F(0) containing the membrane proton channel, linked together by a central stalk and a peripheral stalk. During catalysis, ATP synthesis in the catalytic domain of F(1) is coupled via a rotary mechanism of the central stalk subunits to proton translocation. Its function is as follows. This protein is part of the stalk that links CF(0) to CF(1). It either transmits conformational changes from CF(0) to CF(1) or is implicated in proton conduction. This Geobacter sp. (strain M21) protein is ATP synthase subunit delta.